The following is a 564-amino-acid chain: DNA ligase (564 aa).

Residue Glu-234 coordinates ATP. The active-site N6-AMP-lysine intermediate is Lys-236. ATP contacts are provided by Arg-241, Arg-256, Glu-288, and Phe-323. Position 288 (Glu-288) interacts with a divalent metal cation. Glu-383 contacts a divalent metal cation. Residues Arg-399 and Lys-403 each contribute to the ATP site.

It belongs to the ATP-dependent DNA ligase family. The cofactor is a divalent metal cation.

It catalyses the reaction ATP + (deoxyribonucleotide)n-3'-hydroxyl + 5'-phospho-(deoxyribonucleotide)m = (deoxyribonucleotide)n+m + AMP + diphosphate.. Its function is as follows. DNA ligase that seals nicks in double-stranded DNA during DNA replication, DNA recombination and DNA repair. It is not essential for viral replication and recombination. The protein is DNA ligase (LIG) of Vertebrata (FPV).